The following is a 134-amino-acid chain: Profilin-3 (134 aa).

A disulfide bridge links cysteine 13 with cysteine 118. Positions 84–100 match the Involved in PIP2 interaction motif; that stretch reads AVIRGKKGSGGITIKKT. The residue at position 114 (threonine 114) is a Phosphothreonine.

This sequence belongs to the profilin family. In terms of assembly, occurs in many kinds of cells as a complex with monomeric actin in a 1:1 ratio. Post-translationally, phosphorylated by MAP kinases.

The protein resides in the cytoplasm. It localises to the cytoskeleton. Functionally, binds to actin and affects the structure of the cytoskeleton. At high concentrations, profilin prevents the polymerization of actin, whereas it enhances it at low concentrations. The chain is Profilin-3 from Olea europaea (Common olive).